Reading from the N-terminus, the 668-residue chain is DNA ligase (668 aa).

NAD(+) contacts are provided by residues 35-39 (DKEYD) and 83-84 (SL). The active-site N6-AMP-lysine intermediate is the lysine 125. Positions 147, 181, and 317 each coordinate NAD(+). Residues cysteine 410, cysteine 413, cysteine 426, and cysteine 432 each coordinate Zn(2+). Positions 591-668 (KKDNKFNGKT…TEEEFNEMIN (78 aa)) constitute a BRCT domain.

This sequence belongs to the NAD-dependent DNA ligase family. LigA subfamily. Mg(2+) serves as cofactor. It depends on Mn(2+) as a cofactor.

The enzyme catalyses NAD(+) + (deoxyribonucleotide)n-3'-hydroxyl + 5'-phospho-(deoxyribonucleotide)m = (deoxyribonucleotide)n+m + AMP + beta-nicotinamide D-nucleotide.. Its function is as follows. DNA ligase that catalyzes the formation of phosphodiester linkages between 5'-phosphoryl and 3'-hydroxyl groups in double-stranded DNA using NAD as a coenzyme and as the energy source for the reaction. It is essential for DNA replication and repair of damaged DNA. In Clostridium tetani (strain Massachusetts / E88), this protein is DNA ligase.